Here is a 442-residue protein sequence, read N- to C-terminus: tRNA-2-methylthio-N(6)-dimethylallyladenosine synthase (442 aa).

Residues 2–120 (KKVFIRTFGC…LPKMIVDKET (119 aa)) enclose the MTTase N-terminal domain. Residues Cys-11, Cys-49, Cys-83, Cys-157, Cys-161, and Cys-164 each contribute to the [4Fe-4S] cluster site. One can recognise a Radical SAM core domain in the interval 143–375 (RVEGGAAFVS…NEVIEAETAR (233 aa)). Positions 378 to 441 (QTMIGTVQRC…TFSLRGKVVE (64 aa)) constitute a TRAM domain.

It belongs to the methylthiotransferase family. MiaB subfamily. In terms of assembly, monomer. Requires [4Fe-4S] cluster as cofactor.

Its subcellular location is the cytoplasm. It carries out the reaction N(6)-dimethylallyladenosine(37) in tRNA + (sulfur carrier)-SH + AH2 + 2 S-adenosyl-L-methionine = 2-methylsulfanyl-N(6)-dimethylallyladenosine(37) in tRNA + (sulfur carrier)-H + 5'-deoxyadenosine + L-methionine + A + S-adenosyl-L-homocysteine + 2 H(+). Functionally, catalyzes the methylthiolation of N6-(dimethylallyl)adenosine (i(6)A), leading to the formation of 2-methylthio-N6-(dimethylallyl)adenosine (ms(2)i(6)A) at position 37 in tRNAs that read codons beginning with uridine. The chain is tRNA-2-methylthio-N(6)-dimethylallyladenosine synthase from Neisseria meningitidis serogroup C (strain 053442).